We begin with the raw amino-acid sequence, 447 residues long: Ameloblastin (447 aa).

The N-terminal stretch at 1-26 (MSASKIPLFKMKDLILILCLLEMSFA) is a signal peptide. Pro-37 bears the Hydroxyproline mark. Position 43 is a phosphoserine (Ser-43). A glycan (O-linked (GalNAc...) serine) is linked at Ser-112. Disordered regions lie at residues 165-211 (QQVA…DFAD), 307-338 (DSPV…NLEN), and 353-383 (LLAL…PAAA). 2 consecutive repeat copies span residues 189 to 201 (PSLP…DPQG) and 202 to 214 (PSLP…DPQG).

The protein belongs to the ameloblastin family. In terms of tissue distribution, ameloblast-specific. Located at the Tomes processes of secretory ameloblasts and in the sheath space between rod-interrod enamel.

Its subcellular location is the secreted. The protein resides in the extracellular space. It is found in the extracellular matrix. Involved in the mineralization and structural organization of enamel. This is Ameloblastin (AMBN) from Homo sapiens (Human).